The chain runs to 376 residues: MQKNLFTSESVGRGHPDKICDQISDSILDAVLKIDPNSRCAIEVMASNRLIIIGGEITTQGYVDLVSKSWEILISLGYTENDFTIISNVNEQSKEIANQVDRQDDNIGAGDQGIMFGFASDETKSFMPLAISIAHDLVKRAEKLRVENKINGLKSDMKSQVTIDYSDQKNPKIDTILMSLQHDKDVLLDNFRNDVKKLIIEPVVNDYNLNSNYKCFINPNGSFSIGGPIGDTGLTGRKIIVDTYGGAAHHGGGAFSGKDYTKVDRSAAYMARYIAKNLVAAKVAKKLEIQLSYGIGMIEPISINVNSFGTSKFSDLEITDFIRNNFSLSPKSIIEKLNLKNTKYFPTSFFGHFGRDDLDLPWEKLDQVDKIKKFFK.

Histidine 15 contributes to the ATP binding site. Aspartate 17 is a Mg(2+) binding site. Glutamate 43 provides a ligand contact to K(+). Glutamate 56 and glutamine 92 together coordinate L-methionine. Positions 92–102 are flexible loop; it reads QSKEIANQVDR. ATP contacts are provided by residues 156–158, aspartate 231, 237–238, alanine 254, and lysine 258; these read DMK and RK. Aspartate 231 is an L-methionine binding site. Residue lysine 262 coordinates L-methionine.

It belongs to the AdoMet synthase family. Homotetramer; dimer of dimers. The cofactor is Mg(2+). Requires K(+) as cofactor.

The protein localises to the cytoplasm. The catalysed reaction is L-methionine + ATP + H2O = S-adenosyl-L-methionine + phosphate + diphosphate. The protein operates within amino-acid biosynthesis; S-adenosyl-L-methionine biosynthesis; S-adenosyl-L-methionine from L-methionine: step 1/1. In terms of biological role, catalyzes the formation of S-adenosylmethionine (AdoMet) from methionine and ATP. The overall synthetic reaction is composed of two sequential steps, AdoMet formation and the subsequent tripolyphosphate hydrolysis which occurs prior to release of AdoMet from the enzyme. In Mycoplasmopsis pulmonis (strain UAB CTIP) (Mycoplasma pulmonis), this protein is S-adenosylmethionine synthase.